The following is a 249-amino-acid chain: Isoprenyl transferase (249 aa).

Residue D25 is part of the active site. D25 serves as a coordination point for Mg(2+). Substrate is bound by residues 26–29 (GNGR), W30, R38, H42, and 70–72 (STE). N73 (proton acceptor) is an active-site residue. Substrate-binding positions include W74, R76, R197, and 203 to 205 (RLS). A Mg(2+)-binding site is contributed by E216.

Belongs to the UPP synthase family. As to quaternary structure, homodimer. Mg(2+) serves as cofactor.

Its function is as follows. Catalyzes the condensation of isopentenyl diphosphate (IPP) with allylic pyrophosphates generating different type of terpenoids. This is Isoprenyl transferase from Streptococcus pyogenes serotype M1.